Consider the following 634-residue polypeptide: Chaperone protein HtpG (634 aa).

An a; substrate-binding region spans residues 1-342 (MSVETQKETL…SNDLSLNVSR (342 aa)). Positions 343-559 (EILQKDPVID…EQDLGLQMRQ (217 aa)) are b. Residues 560–634 (ILEASGQKVP…LNKLLVELSA (75 aa)) form a c region.

Belongs to the heat shock protein 90 family. Homodimer.

The protein resides in the cytoplasm. Molecular chaperone. Has ATPase activity. In Ectopseudomonas mendocina (strain ymp) (Pseudomonas mendocina), this protein is Chaperone protein HtpG.